Here is a 416-residue protein sequence, read N- to C-terminus: Multifunctional CCA protein (416 aa).

ATP contacts are provided by Gly8 and Arg11. Residues Gly8 and Arg11 each contribute to the CTP site. Mg(2+)-binding residues include Asp21 and Asp23. ATP contacts are provided by Arg91, Arg137, and Arg140. CTP is bound by residues Arg91, Arg137, and Arg140. Positions 228 to 329 constitute an HD domain; it reads TGLHTMLVLA…IKLFDKADFW (102 aa).

Belongs to the tRNA nucleotidyltransferase/poly(A) polymerase family. Bacterial CCA-adding enzyme type 1 subfamily. As to quaternary structure, monomer. Can also form homodimers and oligomers. The cofactor is Mg(2+). It depends on Ni(2+) as a cofactor.

The enzyme catalyses a tRNA precursor + 2 CTP + ATP = a tRNA with a 3' CCA end + 3 diphosphate. The catalysed reaction is a tRNA with a 3' CCA end + 2 CTP + ATP = a tRNA with a 3' CCACCA end + 3 diphosphate. Its function is as follows. Catalyzes the addition and repair of the essential 3'-terminal CCA sequence in tRNAs without using a nucleic acid template. Adds these three nucleotides in the order of C, C, and A to the tRNA nucleotide-73, using CTP and ATP as substrates and producing inorganic pyrophosphate. tRNA 3'-terminal CCA addition is required both for tRNA processing and repair. Also involved in tRNA surveillance by mediating tandem CCA addition to generate a CCACCA at the 3' terminus of unstable tRNAs. While stable tRNAs receive only 3'-terminal CCA, unstable tRNAs are marked with CCACCA and rapidly degraded. In Shewanella sp. (strain ANA-3), this protein is Multifunctional CCA protein.